The primary structure comprises 208 residues: Thymidylate kinase (208 aa).

Residue 10-17 (GLEGAGKT) coordinates ATP.

It belongs to the thymidylate kinase family.

The catalysed reaction is dTMP + ATP = dTDP + ADP. In terms of biological role, phosphorylation of dTMP to form dTDP in both de novo and salvage pathways of dTTP synthesis. The protein is Thymidylate kinase of Actinobacillus pleuropneumoniae serotype 5b (strain L20).